The primary structure comprises 458 residues: Argininosuccinate lyase (458 aa).

The protein belongs to the lyase 1 family. Argininosuccinate lyase subfamily.

It localises to the cytoplasm. It catalyses the reaction 2-(N(omega)-L-arginino)succinate = fumarate + L-arginine. It participates in amino-acid biosynthesis; L-arginine biosynthesis; L-arginine from L-ornithine and carbamoyl phosphate: step 3/3. The polypeptide is Argininosuccinate lyase (Salmonella typhimurium (strain LT2 / SGSC1412 / ATCC 700720)).